A 1132-amino-acid chain; its full sequence is MASDGASALPGPDMSMKPSAAPSPSPALPFLPPTSDPPDHPPREPPPQPIMPSVFSPDNPLMLSAFPSSLLVTGDGGPCLSGAGAGKVIVKVKTEGGSAEPSQTQNFILTQTALNSTAPGTPCGGLEGPAPPFVTASNVKTILPSKAVGVSQEGPPGLPPQPPPPVAQLVPIVPLEKAWPGPHGTTGEGGPVATLSKPSLGDRSKISKDVYENFRQWQRYKALARRHLSQSPDTEALSCFLIPVLRSLARLKPTMTLEEGLPLAVQEWEHTSNFDRMIFYEMAERFMEFEAEEMQIQNTQLMNGSQGLSPATPLKLDPLGPLASEVCQQPVYIPKKAASKTRAPRRRQRKAQRPPAPEAPKEIPPEAVKEYVDIMEWLVGTHLATGESDGKQEEEGQQQEEEGMYPDPGLLSYINELCSQKVFVSKVEAVIHPQFLADLLSPEKQRDPLALIEELEQEEGLTLAQLVQKRLMALEEEEDAEAPPSFSGAQLDSSPSGSVEDEDGDGRLRPSPGLQGAGGAACLGKVSSSGKRAREVHGGQEQALDSPRGMHRDGNTLPSPSSWDLQPELAAPQGTPGPLGVERRGSGKVINQVSLHQDGHLGGAGPPGHCLVADRTSEALPLCWQGGFQPESTPSLDAGLAELAPLQGQGLEKQVLGLQKGQQTGGRGVLPQGKEPLAVPWEGSSGAMWGDDRGTPMAQSYDQNPSPRAAGERDDVCLSPGVWLSSEMDAVGLELPVQIEEVIESFQVEKCVTEYQEGCQGLGSRGNISLGPGETLVPGDTESSVIPCGGTVAAAALEKRNYCSLPGPLRANSPPLRSKENQEQSCETVGHPSDLWAEGCFPLLESGDSTLGSSKETLPPTCQGNLLIMGTEDASSLPEASQEAGSRGNSFSPLLETIEPVNILDVKDDCGLQLRVSEDTCPLNVHSYDPQGEGRVDPDLSKPKNLAPLQESQESYTTGTPKATSSHQGLGSTLPRRGTRNAIVPRETSVSKTHRSADRAKGKEKKKKEAEEEDEELSNFAYLLASKLSLSPREHPLSPHHASGGQGSQRASHLLPAGAKGPSKLPYPVAKSGKRALAGGPAPTEKTPHSGAQLGVPREKPLALGVVRPSQPRKRRCDSFVTGRRKKRRRSQ.

Disordered regions lie at residues 1–56 (MASD…SVFS), 337–365 (AASKTRAPRRRQRKAQRPPAPEAPKEIPP), 383–405 (LATGESDGKQEEEGQQQEEEGMY), 476–584 (EEED…VERR), 693–714 (RGTPMAQSYDQNPSPRAAGERD), 873–892 (DASSLPEASQEAGSRGNSFS), and 922–1017 (PLNV…DEEL). Residues 21 to 36 (APSPSPALPFLPPTSD) are compositionally biased toward pro residues. Residues 337-352 (AASKTRAPRRRQRKAQ) show a composition bias toward basic residues. A compositionally biased stretch (acidic residues) spans 395-404 (EGQQQEEEGM). Polar residues-rich tracts occupy residues 487-497 (SGAQLDSSPSG), 697-706 (MAQSYDQNPS), and 883-892 (EAGSRGNSFS). A compositionally biased stretch (basic and acidic residues) spans 932–942 (GEGRVDPDLSK). Residues 950 to 971 (QESQESYTTGTPKATSSHQGLG) are compositionally biased toward polar residues. Phosphoserine occurs at positions 1026, 1029, and 1031. The segment at 1031–1132 (SPREHPLSPH…GRRKKRRRSQ (102 aa)) is disordered. An N5-methylglutamine modification is found at Gln1046. Residues 1123–1132 (GRRKKRRRSQ) show a composition bias toward basic residues.

This sequence belongs to the NUT family. In terms of processing, methylated at Gln-1046 by N6AMT1. Phosphorylation on Ser-1026, Ser-1029 or Ser-1031 is important for cytoplasmic export. As to expression, specifically expressed in testis.

The protein resides in the cytoplasm. Its subcellular location is the nucleus. Functionally, plays a role in the regulation of proliferation. Regulates TERT expression by modulating SP1 binding to TERT promoter binding sites. This is NUT family member 1 from Homo sapiens (Human).